The sequence spans 227 residues: ATP phosphoribosyltransferase (227 aa).

Belongs to the ATP phosphoribosyltransferase family. Short subfamily. As to quaternary structure, heteromultimer composed of HisG and HisZ subunits.

It localises to the cytoplasm. The enzyme catalyses 1-(5-phospho-beta-D-ribosyl)-ATP + diphosphate = 5-phospho-alpha-D-ribose 1-diphosphate + ATP. It functions in the pathway amino-acid biosynthesis; L-histidine biosynthesis; L-histidine from 5-phospho-alpha-D-ribose 1-diphosphate: step 1/9. Functionally, catalyzes the condensation of ATP and 5-phosphoribose 1-diphosphate to form N'-(5'-phosphoribosyl)-ATP (PR-ATP). Has a crucial role in the pathway because the rate of histidine biosynthesis seems to be controlled primarily by regulation of HisG enzymatic activity. The polypeptide is ATP phosphoribosyltransferase (Nitrosospira multiformis (strain ATCC 25196 / NCIMB 11849 / C 71)).